We begin with the raw amino-acid sequence, 339 residues long: Phosphoribosylformylglycinamidine cyclo-ligase (339 aa).

It belongs to the AIR synthase family.

It is found in the cytoplasm. The enzyme catalyses 2-formamido-N(1)-(5-O-phospho-beta-D-ribosyl)acetamidine + ATP = 5-amino-1-(5-phospho-beta-D-ribosyl)imidazole + ADP + phosphate + H(+). The protein operates within purine metabolism; IMP biosynthesis via de novo pathway; 5-amino-1-(5-phospho-D-ribosyl)imidazole from N(2)-formyl-N(1)-(5-phospho-D-ribosyl)glycinamide: step 2/2. This chain is Phosphoribosylformylglycinamidine cyclo-ligase, found in Fusobacterium nucleatum subsp. nucleatum (strain ATCC 25586 / DSM 15643 / BCRC 10681 / CIP 101130 / JCM 8532 / KCTC 2640 / LMG 13131 / VPI 4355).